A 460-amino-acid polypeptide reads, in one-letter code: uncharacterized protein (460 aa).

The 59-residue stretch at Asn9–Glu67 folds into the TRAM domain. S-adenosyl-L-methionine contacts are provided by Gln292, Tyr321, Glu342, and Asp390. Cys417 serves as the catalytic Nucleophile.

It belongs to the class I-like SAM-binding methyltransferase superfamily. RNA M5U methyltransferase family.

This is an uncharacterized protein from Lactococcus lactis subsp. lactis (strain IL1403) (Streptococcus lactis).